Here is a 166-residue protein sequence, read N- to C-terminus: MISDESDRFNPRDPKPADAGKPSKSAKRREARKLATQALYQWHMAQHSLNEIEAQFRVDNDFTDVDGAYFREILHGVPAIKGEIDKALVPCMTIALEELDPVELAVLRLSTWELIKRVDVPYRVVINEGVELAKVFGATDGHKFVNGVLDKLAPALREAEVKANKR.

The segment covering 1–18 (MISDESDRFNPRDPKPAD) has biased composition (basic and acidic residues). A disordered region spans residues 1–28 (MISDESDRFNPRDPKPADAGKPSKSAKR).

It belongs to the NusB family.

Functionally, involved in transcription antitermination. Required for transcription of ribosomal RNA (rRNA) genes. Binds specifically to the boxA antiterminator sequence of the ribosomal RNA (rrn) operons. This chain is Transcription antitermination protein NusB, found in Pseudomonas putida (strain GB-1).